The sequence spans 166 residues: 3-hydroxyacyl-[acyl-carrier-protein] dehydratase, mitochondrial (166 aa).

Residues 1–17 (MLAKTVFPRGLLVLRSF) constitute a mitochondrion transit peptide. A MaoC-like domain is found at 34 to 125 (ETRVFSSEDI…VQAIALRETK (92 aa)).

Homodimer. In terms of tissue distribution, expressed in leaves, roots, siliques and flowers.

It is found in the mitochondrion. It catalyses the reaction a (3R)-hydroxyacyl-[ACP] = a (2E)-enoyl-[ACP] + H2O. The catalysed reaction is (3R)-hydroxyhexadecanoyl-[ACP] = (2E)-hexadecenoyl-[ACP] + H2O. It carries out the reaction (3R)-hydroxydecanoyl-[ACP] = (2E)-decenoyl-[ACP] + H2O. The protein operates within lipid metabolism; fatty acid biosynthesis. 3-hydroxyl-[acyl-carrier-protein] (3-hydroxyl-ACP) dehydratase required for mitochondrial fatty acid synthesis (mtFAS). MtFAS are essential for photorespiration and plant development, probably by influencing mitochondrial membrane lipid composition and other lipid metabolic pathways. This Arabidopsis thaliana (Mouse-ear cress) protein is 3-hydroxyacyl-[acyl-carrier-protein] dehydratase, mitochondrial.